Consider the following 223-residue polypeptide: MDSTTLVYADLNLARIQEPKHDSPPSLSPDTCRCPRWHRLALKFGCAGLILLVLVVIGLCVLVLSVQKSSVQKICADVQENRTHTTDCSVNLECPQDWLSHRDKCFRVFQVSNTWEEGQADCGRKGATLLLIQDQEELRFLLDSIKEKYNSFWIGLRFTLPDMNWKWINGTTFNSDVLKITGDTENGSCASISGDKVTSESCSTDNRWICQKELNHETPSNDS.

The Cytoplasmic segment spans residues 1 to 43; sequence MDSTTLVYADLNLARIQEPKHDSPPSLSPDTCRCPRWHRLALK. The ITIM motif signature appears at 6–11; it reads LVYADL. An LCK-binding motif motif is present at residues 32-35; that stretch reads CRCP. Residues 44 to 63 traverse the membrane as a helical; Signal-anchor for type II membrane protein segment; it reads FGCAGLILLVLVVIGLCVLV. Over 64-223 the chain is Extracellular; it reads LSVQKSSVQK…LNHETPSNDS (160 aa). Residues 93 to 212 form the C-type lectin domain; sequence ECPQDWLSHR…STDNRWICQK (120 aa). Intrachain disulfides connect C122-C210 and C189-C202.

Homodimer; disulfide-linked. Interacts with tyrosine kinase LCK. Binds PTPN6/SHP-1 in a phosphorylation-dependent manner. In terms of tissue distribution, expressed in NK cells and a subset of T-cells.

The protein localises to the membrane. Functionally, receptor for CLEC2D/OCIL. Ligand-binding contributes to inhibition of cytotoxic natural killer (NK) cells. May mediate MHC class I-independent 'missing-self' recognition of allografts, tumor cells and virus-infected cells. In Mus musculus (Mouse), this protein is Killer cell lectin-like receptor subfamily B member 1B allele A (Klrb1b).